A 151-amino-acid chain; its full sequence is Major latex allergen Hev b 5 (151 aa).

Residues 1 to 151 (MASVEVESAA…TEVPVEKTEE (151 aa)) form a disordered region. Position 2 is an N-acetylalanine (alanine 2). The segment covering 17–31 (ETPEVTKAEETKTEE) has biased composition (basic and acidic residues). Composition is skewed to low complexity over residues 36 to 45 (PASEQETADA) and 53 to 64 (TAAPAEPEAPAP). 3 stretches are compositionally biased toward basic and acidic residues: residues 65 to 80 (ETEK…KTEE), 103 to 113 (EEPKHETKETE), and 122 to 133 (EGEKPAEEEKPI). Low complexity predominate over residues 134–144 (TEAAETATTEV).

The protein to kiwi fruit protein PKIWI501. In terms of processing, the N-terminus is blocked.

This is Major latex allergen Hev b 5 from Hevea brasiliensis (Para rubber tree).